A 182-amino-acid polypeptide reads, in one-letter code: Ribosome maturation factor RimM (182 aa).

Positions 103–182 constitute a PRC barrel domain; it reads EDDYYWKDLM…RVEVDWDPGF (80 aa).

Belongs to the RimM family. Binds ribosomal protein uS19.

The protein localises to the cytoplasm. In terms of biological role, an accessory protein needed during the final step in the assembly of 30S ribosomal subunit, possibly for assembly of the head region. Essential for efficient processing of 16S rRNA. May be needed both before and after RbfA during the maturation of 16S rRNA. It has affinity for free ribosomal 30S subunits but not for 70S ribosomes. This is Ribosome maturation factor RimM from Yersinia pestis bv. Antiqua (strain Antiqua).